A 178-amino-acid chain; its full sequence is Dual-action ribosomal maturation protein DarP (178 aa).

Belongs to the DarP family.

Its subcellular location is the cytoplasm. Its function is as follows. Member of a network of 50S ribosomal subunit biogenesis factors which assembles along the 30S-50S interface, preventing incorrect 23S rRNA structures from forming. Promotes peptidyl transferase center (PTC) maturation. This is Dual-action ribosomal maturation protein DarP from Haemophilus influenzae (strain 86-028NP).